Reading from the N-terminus, the 493-residue chain is Glycylpeptide N-tetradecanoyltransferase (493 aa).

45 to 48 (HKFW) provides a ligand contact to tetradecanoyl-CoA. The disordered stretch occupies residues 53-73 (VPQITGSGAPAPIEEGPIDDP). Residues 182 to 184 (LCV) and 190 to 194 (SKRLA) contribute to the tetradecanoyl-CoA site. Catalysis depends on L493, which acts as the Proton acceptor; via carboxylate.

This sequence belongs to the NMT family. Monomer.

The protein resides in the cytoplasm. It catalyses the reaction N-terminal glycyl-[protein] + tetradecanoyl-CoA = N-tetradecanoylglycyl-[protein] + CoA + H(+). In terms of biological role, adds a myristoyl group to the N-terminal glycine residue of certain cellular proteins. The sequence is that of Glycylpeptide N-tetradecanoyltransferase from Cryptococcus neoformans var. neoformans serotype D (strain B-3501A) (Filobasidiella neoformans).